Here is a 247-residue protein sequence, read N- to C-terminus: NAD(P)H-quinone oxidoreductase subunit K (247 aa).

The [4Fe-4S] cluster site is built by C63, C64, C128, and C159.

It belongs to the complex I 20 kDa subunit family. In terms of assembly, NDH-1 can be composed of about 15 different subunits; different subcomplexes with different compositions have been identified which probably have different functions. [4Fe-4S] cluster is required as a cofactor.

It localises to the cellular thylakoid membrane. The enzyme catalyses a plastoquinone + NADH + (n+1) H(+)(in) = a plastoquinol + NAD(+) + n H(+)(out). It carries out the reaction a plastoquinone + NADPH + (n+1) H(+)(in) = a plastoquinol + NADP(+) + n H(+)(out). Its function is as follows. NDH-1 shuttles electrons from an unknown electron donor, via FMN and iron-sulfur (Fe-S) centers, to quinones in the respiratory and/or the photosynthetic chain. The immediate electron acceptor for the enzyme in this species is believed to be plastoquinone. Couples the redox reaction to proton translocation, and thus conserves the redox energy in a proton gradient. Cyanobacterial NDH-1 also plays a role in inorganic carbon-concentration. This chain is NAD(P)H-quinone oxidoreductase subunit K, found in Microcystis aeruginosa (strain NIES-843 / IAM M-2473).